A 42-amino-acid chain; its full sequence is Delta-hexatoxin-Hv1a (42 aa).

4 disulfide bridges follow: C1-C15, C8-C20, C14-C31, and C16-C42.

Belongs to the neurotoxin 06 (delta-actx) family. In terms of tissue distribution, expressed by the venom gland.

The protein localises to the secreted. Its function is as follows. Inhibits tetrodotoxin-sensitive voltage-gated sodium channels (Nav) by binding to site 3. Slows the inactivation, and causes a prolongation of action potential duration resulting in repetitive firing in autonomic and motor nerve fibers. Does not depolarize the resting potential. Does not affect tetrodotoxin-resistant sodium channels. This lethal neurotoxin is active on both insect and mammalian voltage-gated sodium channels. Pan-neuronal expression in Drosophila is lethal but flies engineered to express the toxin only in pacemaker neurons have profound defects in circadian rhythm but a normal lifespan. The protein is Delta-hexatoxin-Hv1a of Hadronyche versuta (Blue mountains funnel-web spider).